The following is a 450-amino-acid chain: ATP-dependent protease ATPase subunit HslU (450 aa).

Residues Val-29, 71–76 (GVGKTE), Asp-261, Glu-328, and Arg-400 contribute to the ATP site.

This sequence belongs to the ClpX chaperone family. HslU subfamily. As to quaternary structure, a double ring-shaped homohexamer of HslV is capped on each side by a ring-shaped HslU homohexamer. The assembly of the HslU/HslV complex is dependent on binding of ATP.

It localises to the cytoplasm. ATPase subunit of a proteasome-like degradation complex; this subunit has chaperone activity. The binding of ATP and its subsequent hydrolysis by HslU are essential for unfolding of protein substrates subsequently hydrolyzed by HslV. HslU recognizes the N-terminal part of its protein substrates and unfolds these before they are guided to HslV for hydrolysis. This is ATP-dependent protease ATPase subunit HslU from Rickettsia canadensis (strain McKiel).